Consider the following 81-residue polypeptide: uncharacterized protein (81 aa).

This is an uncharacterized protein from Bacillus subtilis (strain 168).